A 1961-amino-acid chain; its full sequence is Myosin-9 (1961 aa).

Ala2 is modified (N-acetylalanine). The segment at 2-838 is mediates interaction with LIMCH1; the sequence is AQQAADKYLY…RLFTKVKPLL (837 aa). At Lys8 the chain carries N6-acetyllysine. Tyr11 bears the Phosphotyrosine mark. In terms of domain architecture, Myosin N-terminal SH3-like spans 27-77; sequence GAKKLVWVPSTKNGFEPASLKEEVGEEAIVELVENGKKVKVNKDDIQKMNP. The region spanning 81–776 is the Myosin motor domain; the sequence is SKVEDMAELT…VLAHLEEERD (696 aa). Lys102 is subject to N6-acetyllysine. 174-181 serves as a coordination point for ATP; sequence GESGAGKT. N6-acetyllysine is present on residues Lys299, Lys435, and Lys613. Ser628 is subject to Phosphoserine. Positions 654–676 are actin-binding; the sequence is LAKLMATLRNTNPNFVCCIIPNH. A Phosphotyrosine modification is found at Tyr754. Positions 779–808 constitute an IQ domain; the sequence is ITDVIIGFQACCRGYLARKAFAKRQQQLTA. Residues 841-1927 are a coiled coil; it reads IRHEDELLAK…LKNKLRRGDM (1087 aa). N6-succinyllysine is present on Lys850. 3 positions are modified to N6-acetyllysine: Lys860, Lys975, and Lys1024. The span at 1035-1055 shows a compositional bias: basic and acidic residues; the sequence is RLRREEKQRQELEKTRRKLEG. The disordered stretch occupies residues 1035–1057; sequence RLRREEKQRQELEKTRRKLEGDS. Ser1114 carries the post-translational modification Phosphoserine. An N6-acetyllysine mark is found at Lys1234 and Lys1249. A disordered region spans residues 1331–1353; the sequence is LKQMEDEKNSFREQLEEEEEEAK. A compositionally biased stretch (basic and acidic residues) spans 1332–1344; the sequence is KQMEDEKNSFREQ. N6-acetyllysine occurs at positions 1358, 1393, 1405, 1411, 1460, and 1639. The residue at position 1670 (Lys1670) is an N6-succinyllysine. At Ser1715 the chain carries Phosphoserine. N6-acetyllysine occurs at positions 1794, 1803, and 1846. Residues 1878–1910 are disordered; the sequence is RQLEEAEEEAQRANASRRKLQRELEDATETADA. At Arg1924 the chain carries Omega-N-methylarginine. A disordered region spans residues 1938-1961; the sequence is KGTGDCSDEEVDGKADGADAKATE. The residue at position 1944 (Ser1944) is a Phosphoserine. Residues 1949-1961 show a composition bias toward basic and acidic residues; the sequence is DGKADGADAKATE.

This sequence belongs to the TRAFAC class myosin-kinesin ATPase superfamily. Myosin family. Myosin is a hexameric protein that consists of 2 heavy chain subunits (MHC), 2 alkali light chain subunits (MLC) and 2 regulatory light chain subunits (MLC-2). Interacts with RASIP1. Interacts with DDR1. Interacts with PDLIM2. Interacts with SVIL. Interacts with HTRA3. Interacts with Myo7a. Interacts with CFAP95. Interacts with LIMCH1; independently of the integration of MYH9 into the myosin complex. Interacts with RAB3A. Interacts with ZBED4. Interacts with S100A4; this interaction increases cell motility. In terms of processing, ISGylated. Post-translationally, ubiquitination.

The protein localises to the cytoplasm. The protein resides in the cytoskeleton. Its subcellular location is the cell cortex. It is found in the cytoplasmic vesicle. It localises to the secretory vesicle. The protein localises to the cortical granule. Its function is as follows. Cellular myosin that appears to play a role in cytokinesis, cell shape, and specialized functions such as secretion and capping. Required for cortical actin clearance prior to oocyte exocytosis. Promotes cell motility in conjunction with S100A4. During cell spreading, plays an important role in cytoskeleton reorganization, focal contact formation (in the margins but not the central part of spreading cells), and lamellipodial retraction; this function is mechanically antagonized by MYH10. This Rattus norvegicus (Rat) protein is Myosin-9 (Myh9).